The chain runs to 204 residues: Superoxide dismutase [Mn] (204 aa).

Residues His-29, His-84, Asp-167, and His-171 each contribute to the Mn(2+) site.

Belongs to the iron/manganese superoxide dismutase family. As to quaternary structure, homotetramer. It depends on Mn(2+) as a cofactor.

It catalyses the reaction 2 superoxide + 2 H(+) = H2O2 + O2. Destroys superoxide anion radicals which are normally produced within the cells and which are toxic to biological systems. In Thermus aquaticus, this protein is Superoxide dismutase [Mn] (sodA).